The following is a 689-amino-acid chain: uncharacterized protein (689 aa).

4 disordered regions span residues 121 to 206 (LALK…VDPS), 286 to 305 (ASSN…PMDN), 322 to 414 (NSYS…SMAH), and 552 to 611 (AAMP…HLSD). Positions 133 to 158 (SPNNSIPLMANSCLLSADNSSSSTTS) are enriched in low complexity. The span at 322–380 (NSYSYDRYTPNQPSYLESKPGNHQPSYTSEQPMYSTASVPQQISNGPTAVNGLPMNSYT) shows a compositional bias: polar residues. 2 stretches are compositionally biased toward low complexity: residues 381 to 411 (PHSN…SSPS) and 560 to 572 (PSAH…PSPH).

It localises to the cytoplasm. This is an uncharacterized protein from Schizosaccharomyces pombe (strain 972 / ATCC 24843) (Fission yeast).